The sequence spans 118 residues: Fluoride-specific ion channel FluC 2 (118 aa).

The next 4 membrane-spanning stretches (helical) occupy residues 1-21, 33-53, 55-75, and 93-113; these read MIEALLVATGGFFGAITRFAI, FPIATFLINITGAFLLGYIIG, GVTTGWQLLLGTGFMGAFTTF, and TFLLYLSATYIVGILFAFLGM. Positions 70 and 73 each coordinate Na(+).

This sequence belongs to the fluoride channel Fluc/FEX (TC 1.A.43) family.

The protein resides in the cell membrane. The enzyme catalyses fluoride(in) = fluoride(out). Its activity is regulated as follows. Na(+) is not transported, but it plays an essential structural role and its presence is essential for fluoride channel function. In terms of biological role, fluoride-specific ion channel. Important for reducing fluoride concentration in the cell, thus reducing its toxicity. The protein is Fluoride-specific ion channel FluC 2 of Bacillus thuringiensis subsp. konkukian (strain 97-27).